The sequence spans 420 residues: Shaggy-related protein kinase delta (420 aa).

Positions Met1–Pro61 are disordered. A compositionally biased stretch (polar residues) spans Gly10–Asp26. The span at Leu28–Thr41 shows a compositional bias: basic and acidic residues. Acidic residues predominate over residues Glu42–Ile53. Residues Tyr82 to Phe366 form the Protein kinase domain. ATP is bound by residues Val88–Val96 and Lys111. The active-site Proton acceptor is Asp207. Tyr242 is modified (phosphotyrosine).

It belongs to the protein kinase superfamily. CMGC Ser/Thr protein kinase family. GSK-3 subfamily. Post-translationally, autophosphorylated mainly on threonine and serine residues.

It catalyses the reaction L-seryl-[protein] + ATP = O-phospho-L-seryl-[protein] + ADP + H(+). It carries out the reaction L-threonyl-[protein] + ATP = O-phospho-L-threonyl-[protein] + ADP + H(+). Its function is as follows. May mediate extracellular signals to regulate transcription in differentiating cells. This Arabidopsis thaliana (Mouse-ear cress) protein is Shaggy-related protein kinase delta (ASK4).